Consider the following 277-residue polypeptide: MLFRAMGYVIAAFYRFVHLHNYYDMKPVILEFCLSRGIKGTVILAEQGINATIAGSRQSIGEFFSFLDSDDRLRGMKYHESHSDREPFAKMKVRLKREVVRLGIDGFDCSLRGEYIDPRDWDEFVSSPDVHVIDTRNDYEVRLGRFKGAIDPGTSSFREFPEWARNWALDKERDTCVAMYCTGGIRCEKSTAFMRSLGFRNVYHLRGGILNYLETMRGDDSLWEGECFVFDDRIAVDRNVSPSEDIKCIKCAGEVDASDLRSVSKGNIMCWDCRLQA.

The region spanning 126–221 (SSPDVHVIDT…YLETMRGDDS (96 aa)) is the Rhodanese domain. The active-site Cysteine persulfide intermediate is cysteine 181.

This sequence belongs to the TrhO family.

The enzyme catalyses uridine(34) in tRNA + AH2 + O2 = 5-hydroxyuridine(34) in tRNA + A + H2O. Catalyzes oxygen-dependent 5-hydroxyuridine (ho5U) modification at position 34 in tRNAs. The polypeptide is tRNA uridine(34) hydroxylase (Anaplasma marginale (strain St. Maries)).